Reading from the N-terminus, the 379-residue chain is Queuine tRNA-ribosyltransferase (379 aa).

D94 (proton acceptor) is an active-site residue. Substrate-binding positions include 94–98 (DSGGF), D148, Q191, and G218. The RNA binding stretch occupies residues 249–255 (GVGSPDA). D268 functions as the Nucleophile in the catalytic mechanism. An RNA binding; important for wobble base 34 recognition region spans residues 273 to 277 (TRIAR). Positions 306, 308, 311, and 337 each coordinate Zn(2+).

Belongs to the queuine tRNA-ribosyltransferase family. Homodimer. Within each dimer, one monomer is responsible for RNA recognition and catalysis, while the other monomer binds to the replacement base PreQ1. Zn(2+) serves as cofactor.

It catalyses the reaction 7-aminomethyl-7-carbaguanine + guanosine(34) in tRNA = 7-aminomethyl-7-carbaguanosine(34) in tRNA + guanine. Its pathway is tRNA modification; tRNA-queuosine biosynthesis. Its function is as follows. Catalyzes the base-exchange of a guanine (G) residue with the queuine precursor 7-aminomethyl-7-deazaguanine (PreQ1) at position 34 (anticodon wobble position) in tRNAs with GU(N) anticodons (tRNA-Asp, -Asn, -His and -Tyr). Catalysis occurs through a double-displacement mechanism. The nucleophile active site attacks the C1' of nucleotide 34 to detach the guanine base from the RNA, forming a covalent enzyme-RNA intermediate. The proton acceptor active site deprotonates the incoming PreQ1, allowing a nucleophilic attack on the C1' of the ribose to form the product. After dissociation, two additional enzymatic reactions on the tRNA convert PreQ1 to queuine (Q), resulting in the hypermodified nucleoside queuosine (7-(((4,5-cis-dihydroxy-2-cyclopenten-1-yl)amino)methyl)-7-deazaguanosine). The chain is Queuine tRNA-ribosyltransferase from Staphylococcus aureus (strain Mu3 / ATCC 700698).